The chain runs to 44 residues: MVMKTGQYVLYEQKLKSLLNENAKLVINTKHREFSNWKDPSCSS.

This is an uncharacterized protein from Caenorhabditis elegans.